The following is a 303-amino-acid chain: MTIIKQEKTLFFFKNLQNIICNTFSKIDGKSLFKEDMWNTKKGYGRTRILKKGKVFEQVSVNFSHVFGKSLPKSSSNKKRDLENCSYQASGISVVSHPKNPYVPTSHLNIRFFLAKNKKRKTIWWFGGGFDLTPYYGFYQDVIHWHTIAKKICQPFGDDIYFKYKKWCDDYFFIKHRNESRGIGGLFFDDLCLPDFHSAFLFSKSIGKGYIDAYFPIVNLRKSYSWGSRERNFQLYRRGRYVEFNLLLDRGTLFGIQSNGRIESILSSMPPLVKWEYGWHPKPNSPESKLYTDFLPIKDWIDK.

Ser93 provides a ligand contact to substrate. Residues His97 and His107 each contribute to the a divalent metal cation site. The active-site Proton donor is the His107. A substrate-binding site is contributed by 109–111; the sequence is NIR. Positions 146 and 176 each coordinate a divalent metal cation. Residues 241 to 276 form an important for dimerization region; that stretch reads YVEFNLLLDRGTLFGIQSNGRIESILSSMPPLVKWE.

Belongs to the aerobic coproporphyrinogen-III oxidase family. In terms of assembly, homodimer. A divalent metal cation serves as cofactor.

It is found in the cytoplasm. It carries out the reaction coproporphyrinogen III + O2 + 2 H(+) = protoporphyrinogen IX + 2 CO2 + 2 H2O. The protein operates within porphyrin-containing compound metabolism; protoporphyrin-IX biosynthesis; protoporphyrinogen-IX from coproporphyrinogen-III (O2 route): step 1/1. Functionally, involved in the heme biosynthesis. Catalyzes the aerobic oxidative decarboxylation of propionate groups of rings A and B of coproporphyrinogen-III to yield the vinyl groups in protoporphyrinogen-IX. The protein is Oxygen-dependent coproporphyrinogen-III oxidase of Wigglesworthia glossinidia brevipalpis.